Consider the following 293-residue polypeptide: Single-pass membrane and coiled-coil domain-containing protein 2 (293 aa).

The stretch at 116 to 188 forms a coiled coil; the sequence is KNLLEFLLKD…SAKLRMYQME (73 aa). A helical transmembrane segment spans residues 234–254; sequence IFIMFYVLTVTGLLCYILFFG.

The protein localises to the membrane. This Macaca fascicularis (Crab-eating macaque) protein is Single-pass membrane and coiled-coil domain-containing protein 2 (SMCO2).